Consider the following 75-residue polypeptide: Exodeoxyribonuclease 7 small subunit (75 aa).

This sequence belongs to the XseB family. In terms of assembly, heterooligomer composed of large and small subunits.

It localises to the cytoplasm. The enzyme catalyses Exonucleolytic cleavage in either 5'- to 3'- or 3'- to 5'-direction to yield nucleoside 5'-phosphates.. In terms of biological role, bidirectionally degrades single-stranded DNA into large acid-insoluble oligonucleotides, which are then degraded further into small acid-soluble oligonucleotides. The chain is Exodeoxyribonuclease 7 small subunit from Clostridium perfringens (strain ATCC 13124 / DSM 756 / JCM 1290 / NCIMB 6125 / NCTC 8237 / Type A).